The primary structure comprises 428 residues: Adenylosuccinate synthetase (428 aa).

GTP is bound by residues 12-18 and 40-42; these read GDEGKGK and GHS. Catalysis depends on Asp13, which acts as the Proton acceptor. Residues Asp13 and Gly40 each contribute to the Mg(2+) site. IMP contacts are provided by residues 13-16, 38-41, Thr128, Arg142, Gln223, Thr238, and Arg302; these read DEGK and NAGH. Residue His41 is the Proton donor of the active site. 298–304 is a substrate binding site; that stretch reads VTTGRPR. GTP is bound by residues Arg304, 330 to 332, and 412 to 414; these read KLD and GTG.

This sequence belongs to the adenylosuccinate synthetase family. Homodimer. Mg(2+) serves as cofactor.

It localises to the cytoplasm. It catalyses the reaction IMP + L-aspartate + GTP = N(6)-(1,2-dicarboxyethyl)-AMP + GDP + phosphate + 2 H(+). Its pathway is purine metabolism; AMP biosynthesis via de novo pathway; AMP from IMP: step 1/2. In terms of biological role, plays an important role in the de novo pathway of purine nucleotide biosynthesis. Catalyzes the first committed step in the biosynthesis of AMP from IMP. The protein is Adenylosuccinate synthetase of Bifidobacterium longum (strain DJO10A).